We begin with the raw amino-acid sequence, 257 residues long: Ribonuclease HII (257 aa).

Positions 72-257 (TYIAGIDEVG…FAPIKDMIQK (186 aa)) constitute an RNase H type-2 domain. Residues Asp78, Glu79, and Asp170 each coordinate a divalent metal cation.

It belongs to the RNase HII family. It depends on Mn(2+) as a cofactor. Mg(2+) serves as cofactor.

The protein resides in the cytoplasm. It catalyses the reaction Endonucleolytic cleavage to 5'-phosphomonoester.. In terms of biological role, endonuclease that specifically degrades the RNA of RNA-DNA hybrids. In Bacillus mycoides (strain KBAB4) (Bacillus weihenstephanensis), this protein is Ribonuclease HII.